Here is a 486-residue protein sequence, read N- to C-terminus: Bifunctional protein HldE (486 aa).

The interval 1-331 is ribokinase; it reads MAEHDDGDLI…VDAVKPASGA (331 aa). An ATP-binding site is contributed by 208 to 211; the sequence is NRRE. D277 is an active-site residue. A cytidylyltransferase region spans residues 357 to 486; that stretch reads FTNGCFDLLH…TTATVTRLRS (130 aa).

It in the N-terminal section; belongs to the carbohydrate kinase PfkB family. This sequence in the C-terminal section; belongs to the cytidylyltransferase family. As to quaternary structure, homodimer.

The enzyme catalyses D-glycero-beta-D-manno-heptose 7-phosphate + ATP = D-glycero-beta-D-manno-heptose 1,7-bisphosphate + ADP + H(+). The catalysed reaction is D-glycero-beta-D-manno-heptose 1-phosphate + ATP + H(+) = ADP-D-glycero-beta-D-manno-heptose + diphosphate. It functions in the pathway nucleotide-sugar biosynthesis; ADP-L-glycero-beta-D-manno-heptose biosynthesis; ADP-L-glycero-beta-D-manno-heptose from D-glycero-beta-D-manno-heptose 7-phosphate: step 1/4. It participates in nucleotide-sugar biosynthesis; ADP-L-glycero-beta-D-manno-heptose biosynthesis; ADP-L-glycero-beta-D-manno-heptose from D-glycero-beta-D-manno-heptose 7-phosphate: step 3/4. Functionally, catalyzes the phosphorylation of D-glycero-D-manno-heptose 7-phosphate at the C-1 position to selectively form D-glycero-beta-D-manno-heptose-1,7-bisphosphate. In terms of biological role, catalyzes the ADP transfer from ATP to D-glycero-beta-D-manno-heptose 1-phosphate, yielding ADP-D-glycero-beta-D-manno-heptose. In Acidiphilium cryptum (strain JF-5), this protein is Bifunctional protein HldE.